The following is a 173-amino-acid chain: Peptide methionine sulfoxide reductase MsrA (173 aa).

Cysteine 10 is a catalytic residue.

The protein belongs to the MsrA Met sulfoxide reductase family.

It catalyses the reaction L-methionyl-[protein] + [thioredoxin]-disulfide + H2O = L-methionyl-(S)-S-oxide-[protein] + [thioredoxin]-dithiol. It carries out the reaction [thioredoxin]-disulfide + L-methionine + H2O = L-methionine (S)-S-oxide + [thioredoxin]-dithiol. Its function is as follows. Has an important function as a repair enzyme for proteins that have been inactivated by oxidation. Catalyzes the reversible oxidation-reduction of methionine sulfoxide in proteins to methionine. This is Peptide methionine sulfoxide reductase MsrA from Acinetobacter baumannii (strain AB307-0294).